Here is a 323-residue protein sequence, read N- to C-terminus: tRNA U34 carboxymethyltransferase (323 aa).

Residues Lys91, Trp105, Lys110, Gly130, 181 to 182 (IE), Met196, Tyr200, and Arg315 contribute to the carboxy-S-adenosyl-L-methionine site.

Belongs to the class I-like SAM-binding methyltransferase superfamily. CmoB family. Homotetramer.

The catalysed reaction is carboxy-S-adenosyl-L-methionine + 5-hydroxyuridine(34) in tRNA = 5-carboxymethoxyuridine(34) in tRNA + S-adenosyl-L-homocysteine + H(+). Catalyzes carboxymethyl transfer from carboxy-S-adenosyl-L-methionine (Cx-SAM) to 5-hydroxyuridine (ho5U) to form 5-carboxymethoxyuridine (cmo5U) at position 34 in tRNAs. In Yersinia pseudotuberculosis serotype O:1b (strain IP 31758), this protein is tRNA U34 carboxymethyltransferase.